Consider the following 716-residue polypeptide: Segment polarity protein dishevelled homolog DVL-3 (716 aa).

The region spanning Met-1–Glu-82 is the DIX domain. Omega-N-methylarginine is present on Arg-27. Ser-48 and Ser-125 each carry phosphoserine. Positions His-85–Phe-235 are disordered. The span at Gln-142 to Thr-156 shows a compositional bias: basic and acidic residues. The span at Ser-175 to Phe-190 shows a compositional bias: low complexity. Ser-192 is subject to Phosphoserine. Over residues Ser-199–Arg-212 the composition is skewed to low complexity. Residue Arg-212 is modified to Omega-N-methylarginine. Residues Leu-213–Val-226 are compositionally biased toward basic residues. The region spanning Thr-249–Glu-321 is the PDZ domain. Arg-271 is modified (asymmetric dimethylarginine; by PRMT1; alternate). Arg-271 and Arg-342 each carry symmetric dimethylarginine; by PRMT7; alternate. Position 342 is an omega-N-methylarginine; alternate (Arg-342). Thr-346 carries the phosphothreonine modification. The 75-residue stretch at Pro-422–Asp-496 folds into the DEP domain. The segment at Pro-546–Pro-691 is disordered. A compositionally biased stretch (low complexity) spans Ala-565–Ser-581. Composition is skewed to basic and acidic residues over residues Gly-582–Asp-595 and Glu-604–Ser-622. Arg-614 is subject to Symmetric dimethylarginine; by PRMT7. Positions Tyr-653 to Pro-682 are enriched in pro residues. Ser-697 carries the phosphoserine modification. Arg-698 is subject to Omega-N-methylarginine; alternate. Arg-698 is subject to Dimethylated arginine; alternate. Position 700 is a phosphoserine (Ser-700).

This sequence belongs to the DSH family. In terms of assembly, interacts (via the PDZ domain) with the C-terminal regions of VANGL1 and VANGL2. Interacts (via the region containing both the PDZ and DEP domains) with LRRFIP2; the DIX domain may inhibit this interaction. Interacts with CYLD, CEP164 and DAB2. Interacts with DCDC2. Interacts with FOXK1 and FOXK2. Interacts with DAAM2. Post-translationally, ubiquitinated. Deubiquitinated by CYLD, which acts on 'Lys-63'-linked ubiquitin chains. In terms of processing, phosphorylated by CSNK1D. Arginine methylation may function as a switch in regulation of function in Wnt signaling.

It is found in the cytoplasm. Functionally, involved in the signal transduction pathway mediated by multiple Wnt genes. The polypeptide is Segment polarity protein dishevelled homolog DVL-3 (DVL3) (Homo sapiens (Human)).